We begin with the raw amino-acid sequence, 379 residues long: Cytochrome b (379 aa).

Transmembrane regions (helical) follow at residues 33 to 53 (FGSL…FLAM), 77 to 98 (WLIR…FIHV), 113 to 133 (WNIG…GYVL), and 178 to 198 (FFAF…VHLL). Residues His-83 and His-97 each contribute to the heme b site. Heme b is bound by residues His-182 and His-196. His-201 contacts a ubiquinone. The next 4 helical transmembrane spans lie at 226–246 (TKDL…ALFF), 288–308 (LGGV…PLLN), 320–340 (VTQV…WIGG), and 347–367 (FTMI…ILMP).

It belongs to the cytochrome b family. The cytochrome bc1 complex contains 11 subunits: 3 respiratory subunits (MT-CYB, CYC1 and UQCRFS1), 2 core proteins (UQCRC1 and UQCRC2) and 6 low-molecular weight proteins (UQCRH/QCR6, UQCRB/QCR7, UQCRQ/QCR8, UQCR10/QCR9, UQCR11/QCR10 and a cleavage product of UQCRFS1). This cytochrome bc1 complex then forms a dimer. Heme b is required as a cofactor.

Its subcellular location is the mitochondrion inner membrane. Its function is as follows. Component of the ubiquinol-cytochrome c reductase complex (complex III or cytochrome b-c1 complex) that is part of the mitochondrial respiratory chain. The b-c1 complex mediates electron transfer from ubiquinol to cytochrome c. Contributes to the generation of a proton gradient across the mitochondrial membrane that is then used for ATP synthesis. This Akodon fumeus (Smoky grass mouse) protein is Cytochrome b (MT-CYB).